We begin with the raw amino-acid sequence, 234 residues long: tRNA (guanine-N(1)-)-methyltransferase (234 aa).

S-adenosyl-L-methionine-binding positions include G115 and 135 to 140 (VGDYIL).

This sequence belongs to the RNA methyltransferase TrmD family. Homodimer.

It is found in the cytoplasm. It carries out the reaction guanosine(37) in tRNA + S-adenosyl-L-methionine = N(1)-methylguanosine(37) in tRNA + S-adenosyl-L-homocysteine + H(+). In terms of biological role, specifically methylates guanosine-37 in various tRNAs. This Rickettsia peacockii (strain Rustic) protein is tRNA (guanine-N(1)-)-methyltransferase.